The primary structure comprises 213 residues: Ras-related protein Rab-39B (213 aa).

GTP-binding residues include serine 17, glycine 20, lysine 21, serine 22, cysteine 23, serine 37, and threonine 40. Serine 22 serves as a coordination point for Mg(2+). The switch-I stretch occupies residues 35 to 43 (QVSDPTVGV). Positions 40 and 64 each coordinate Mg(2+). Residues glycine 67, histidine 123, lysine 124, aspartate 126, alanine 154, and arginine 155 each contribute to the GTP site. The segment at 67–83 (GQERFRSITRAYYRNSV) is switch-II. At serine 201 the chain carries Phosphoserine. S-geranylgeranyl cysteine attachment occurs at residues cysteine 211 and cysteine 213. Cysteine 213 carries the cysteine methyl ester modification.

The protein belongs to the small GTPase superfamily. Rab family. Interacts (GDP-bound) with C9orf72; C9orf72 in complex with SMCR8 acts as a GEF for RAB39B. Interacts (in GTP-bound form) with PICK1 (via PDZ domain); a PICK1 homodimer may allow simultaneous association of RAB39B and GRIA2 to PICK1 which is involved in GRIA2 trafficking. Interacts with isoform c of RASSF1; the interaction is strong. Interacts with isoform a of RASSF1; the interaction is weak. Interacts with the DLG4/PSD-95. Interacts (GTP-bound) with HOPS complex components VPS39 and VPS41. Requires Mg(2+) as cofactor.

The protein localises to the cell membrane. It localises to the cytoplasmic vesicle membrane. Its subcellular location is the golgi apparatus. The protein resides in the cytoplasmic vesicle. It is found in the autophagosome membrane. The protein localises to the autolysosome membrane. It carries out the reaction GTP + H2O = GDP + phosphate + H(+). Its activity is regulated as follows. Regulated by guanine nucleotide exchange factors (GEFs) including C9orf72-SMCR8 complex, which promote the exchange of bound GDP for free GTP. Regulated by GTPase activating proteins (GAPs) which increase the GTP hydrolysis activity. Inhibited by GDP dissociation inhibitors (GDIs). Its function is as follows. The small GTPases Rab are key regulators of intracellular membrane trafficking, from the formation of transport vesicles to their fusion with membranes. Rabs cycle between an inactive GDP-bound form and an active GTP-bound form that is able to recruit to membranes different sets of downstream effectors directly responsible for vesicle formation, movement, tethering and fusion. RAB39B is involved in autophagy and may function in autophagosome formation. Binds downstream effector PICK1 to ensure selectively GRIA2 exit from the endoplasmic reticulum to the Golgi and to regulate AMPAR composition at the post-synapses and thus synaptic transmission. May regulate the homeostasis of SNCA/alpha-synuclein. This is Ras-related protein Rab-39B (RAB39B) from Bos taurus (Bovine).